The chain runs to 265 residues: Mlc titration factor A (265 aa).

Residues H111, H148, H152, and E211 each contribute to the Zn(2+) site.

It belongs to the MtfA family. As to quaternary structure, interacts with Mlc. Requires Zn(2+) as cofactor.

It is found in the cytoplasm. Functionally, involved in the modulation of the activity of the glucose-phosphotransferase system (glucose-PTS). Interacts with the transcriptional repressor Mlc, preventing its interaction with DNA and leading to the modulation of expression of genes regulated by Mlc, including ptsG, which encodes the PTS system glucose-specific EIICB component. Its function is as follows. Shows zinc-dependent metallopeptidase activity. The chain is Mlc titration factor A from Salmonella schwarzengrund (strain CVM19633).